We begin with the raw amino-acid sequence, 78 residues long: RNA-binding protein Hfq (78 aa).

The Sm domain maps to Asp-10–Val-69.

It belongs to the Hfq family. As to quaternary structure, homohexamer.

In terms of biological role, RNA chaperone that binds small regulatory RNA (sRNAs) and mRNAs to facilitate mRNA translational regulation in response to envelope stress, environmental stress and changes in metabolite concentrations. Also binds with high specificity to tRNAs. The protein is RNA-binding protein Hfq of Dechloromonas aromatica (strain RCB).